Consider the following 128-residue polypeptide: Aspartate 1-decarboxylase (128 aa).

Catalysis depends on S25, which acts as the Schiff-base intermediate with substrate; via pyruvic acid. At S25 the chain carries Pyruvic acid (Ser). T57 is a substrate binding site. Y58 (proton donor) is an active-site residue. Position 73-75 (73-75 (GSA)) interacts with substrate.

This sequence belongs to the PanD family. As to quaternary structure, heterooctamer of four alpha and four beta subunits. It depends on pyruvate as a cofactor. In terms of processing, is synthesized initially as an inactive proenzyme, which is activated by self-cleavage at a specific serine bond to produce a beta-subunit with a hydroxyl group at its C-terminus and an alpha-subunit with a pyruvoyl group at its N-terminus.

It is found in the cytoplasm. It catalyses the reaction L-aspartate + H(+) = beta-alanine + CO2. It functions in the pathway cofactor biosynthesis; (R)-pantothenate biosynthesis; beta-alanine from L-aspartate: step 1/1. In terms of biological role, catalyzes the pyruvoyl-dependent decarboxylation of aspartate to produce beta-alanine. The sequence is that of Aspartate 1-decarboxylase from Paraburkholderia xenovorans (strain LB400).